The sequence spans 802 residues: Cullin-4 (802 aa).

Low complexity-rich tracts occupy residues 1–33 (MNFN…NNNN) and 656–676 (STSS…ASGS). Disordered stretches follow at residues 1–43 (MNFN…SLAG) and 656–686 (STSS…GGAT). Positions 734-794 (DRQYQVDAAI…KEYLCRDPEN (61 aa)) constitute a Cullin neddylation domain. Residue K748 forms a Glycyl lysine isopeptide (Lys-Gly) (interchain with G-Cter in NEDD8) linkage.

The protein belongs to the cullin family. Post-translationally, neddylated. Deneddylated via its interaction with the COP9 signalosome (CSN) complex.

It participates in protein modification; protein ubiquitination. Probable core component of cullin-based SCF-like E3 ubiquitin-protein ligase complexes which mediate the ubiquitination and subsequent proteasomal degradation of target proteins. The E3 ubiquitin-protein ligase activity of the complex is dependent on the neddylation of the cullin subunit. This Dictyostelium discoideum (Social amoeba) protein is Cullin-4 (culD).